Here is a 62-residue protein sequence, read N- to C-terminus: U8-theraphotoxin-Cg1a 2 (62 aa).

A signal peptide spans 1-21 (MKTLVLFIIFGLAALFLLSSA). Residues 22–29 (TELEETER) constitute a propeptide that is removed on maturation. Intrachain disulfides connect cysteine 31-cysteine 46, cysteine 38-cysteine 51, and cysteine 45-cysteine 58.

It belongs to the neurotoxin 10 (Hwtx-1) family. 30 (Jztx-14) subfamily. Expressed by the venom gland.

The protein resides in the secreted. Functionally, probable ion channel inhibitor. In Chilobrachys guangxiensis (Chinese earth tiger tarantula), this protein is U8-theraphotoxin-Cg1a 2.